We begin with the raw amino-acid sequence, 342 residues long: Oxygen-dependent coproporphyrinogen-III oxidase (342 aa).

Residue S98 coordinates substrate. H102 and H112 together coordinate a divalent metal cation. H112 serves as the catalytic Proton donor. N114–R116 is a binding site for substrate. A divalent metal cation-binding residues include H146 and H176. An important for dimerization region spans residues Y266–E301.

Belongs to the aerobic coproporphyrinogen-III oxidase family. As to quaternary structure, homodimer. It depends on a divalent metal cation as a cofactor.

The protein localises to the cytoplasm. The catalysed reaction is coproporphyrinogen III + O2 + 2 H(+) = protoporphyrinogen IX + 2 CO2 + 2 H2O. The protein operates within porphyrin-containing compound metabolism; protoporphyrin-IX biosynthesis; protoporphyrinogen-IX from coproporphyrinogen-III (O2 route): step 1/1. Its function is as follows. Involved in the heme and chlorophyll biosynthesis. Catalyzes the aerobic oxidative decarboxylation of propionate groups of rings A and B of coproporphyrinogen-III to yield the vinyl groups in protoporphyrinogen-IX. The chain is Oxygen-dependent coproporphyrinogen-III oxidase from Prochlorococcus marinus (strain MIT 9515).